Consider the following 736-residue polypeptide: MFRFAQPANVLKGKAPSQIVPPHPKTNSFVHPSAHPLKFNPNSAMTVEVPTHQNGPASNNQYNGNHSRPHFKNQFSSRNSSFTNVMNYGKNHGNNNMSPDSPWYNEVVAFEDCVSQTLYMSQTPRRSNMRNNGNNNMNNGRRTEHPNTQANPLFWDSIGRAMGLYHDLINTPELNSDRVSKLVHLLHNGLRANRNQLTRMNKKPDYDSQSFHKEMTNYLCKSLREISEDVLNGKVELNEYGAMHLITAFKELLLFQEAVNIWKSAINGSNNYTSNIFLNPRVVGVILPILYENGVSYPEIQSLYEKSSSMINYFHPNLSVGMIRASLSASENQMALKLFQKLCEESTEMKYGYLIETHLSFIGECKDLNVAQAFFDKALNDEMPYKIDLQVSYVKSFLKNIWSQTGDFNHIYQIWYKSSLHYGRHVNHGISSSLNDTFFDIFFENYANDKVQGFPMLQNIIQNYHNMKNIDEPFFNIILAKCTVWHDRTILEYIDNSYDAFNIPKTIVAYRILLKSMGSIDDVTTQEILQRWINLICKSDEIGQRFIANADWAALRDATVTWTQRNRGISSSSPMSAVNSLAPSTTNTPSPSLSPIPDRDTLSSARNTPNKIWSGTPVPPPSTEMDFYSHPAFQAANASGAFDDMASATVNPTPRKNFTNGIVPNTPQPIDDRMVLYLKIVKRYSPFCRDSRQLARLTTGTAVKYSVLQEVLNQFQSLNVNDIPVPELRNLKPTCV.

Disordered stretches follow at residues 1–28 (MFRFAQPANVLKGKAPSQIVPPHPKTNS), 124–148 (PRRSNMRNNGNNNMNNGRRTEHPNT), and 566–618 (NRGI…GTPV). A mitochondrion-targeting transit peptide spans 1 to 79 (MFRFAQPANV…HFKNQFSSRN (79 aa)). The span at 125-140 (RRSNMRNNGNNNMNNG) shows a compositional bias: low complexity. A compositionally biased stretch (polar residues) spans 566 to 578 (NRGISSSSPMSAV). The segment covering 579–596 (NSLAPSTTNTPSPSLSPI) has biased composition (low complexity). Residues 602–613 (LSSARNTPNKIW) are compositionally biased toward polar residues.

Belongs to the RMD9 family. Monomer. Post-translationally, phosphorylated. Phosphorylation promotes binding to RNA.

The protein resides in the mitochondrion inner membrane. In terms of biological role, may be involved in the processing or stability of mitochondrial mRNAs. This Candida glabrata (strain ATCC 2001 / BCRC 20586 / JCM 3761 / NBRC 0622 / NRRL Y-65 / CBS 138) (Yeast) protein is RNA-binding protein RMD9-like, mitochondrial.